Reading from the N-terminus, the 358-residue chain is Alanine racemase (358 aa).

The Proton acceptor; specific for D-alanine role is filled by lysine 35. The residue at position 35 (lysine 35) is an N6-(pyridoxal phosphate)lysine. Arginine 130 is a binding site for substrate. Catalysis depends on tyrosine 255, which acts as the Proton acceptor; specific for L-alanine. Methionine 303 serves as a coordination point for substrate.

Belongs to the alanine racemase family. Pyridoxal 5'-phosphate serves as cofactor.

It carries out the reaction L-alanine = D-alanine. It functions in the pathway amino-acid biosynthesis; D-alanine biosynthesis; D-alanine from L-alanine: step 1/1. Functionally, catalyzes the interconversion of L-alanine and D-alanine. May also act on other amino acids. The polypeptide is Alanine racemase (alr) (Shewanella sp. (strain ANA-3)).